We begin with the raw amino-acid sequence, 82 residues long: Sec-independent protein translocase protein TatA (82 aa).

A helical membrane pass occupies residues 1 to 21 (MGSLSIWHWLIVGAVVLLVFG). The tract at residues 43 to 82 (GLSEDEEKAEAKPVGEPSLRSLDHQGAGDPLKTPDARKIG) is disordered.

This sequence belongs to the TatA/E family. In terms of assembly, the Tat system comprises two distinct complexes: a TatABC complex, containing multiple copies of TatA, TatB and TatC subunits, and a separate TatA complex, containing only TatA subunits. Substrates initially bind to the TatABC complex, which probably triggers association of the separate TatA complex to form the active translocon.

The protein localises to the cell inner membrane. In terms of biological role, part of the twin-arginine translocation (Tat) system that transports large folded proteins containing a characteristic twin-arginine motif in their signal peptide across membranes. TatA could form the protein-conducting channel of the Tat system. This Methylocella silvestris (strain DSM 15510 / CIP 108128 / LMG 27833 / NCIMB 13906 / BL2) protein is Sec-independent protein translocase protein TatA.